We begin with the raw amino-acid sequence, 117 residues long: Iron-sulfur cluster insertion protein ErpA (117 aa).

Cys-45, Cys-109, and Cys-111 together coordinate iron-sulfur cluster.

It belongs to the HesB/IscA family. Homodimer. It depends on iron-sulfur cluster as a cofactor.

Functionally, required for insertion of 4Fe-4S clusters for at least IspG. This Blochmanniella pennsylvanica (strain BPEN) protein is Iron-sulfur cluster insertion protein ErpA.